The primary structure comprises 285 residues: HTH-type transcriptional regulator MurR (285 aa).

In terms of domain architecture, HTH rpiR-type spans 1–77 (MLYLTKIRNA…MALIGEYSAS (77 aa)). A DNA-binding region (H-T-H motif) is located at residues 37–56 (SRQMAKQLGISQSSIVKFAQ). The SIS domain occupies 128–268 (IIEVISKAPF…FVGLVQLNDV (141 aa)).

As to quaternary structure, homotetramer.

It participates in amino-sugar metabolism; N-acetylmuramate degradation [regulation]. Represses the expression of the murPQ operon involved in the uptake and degradation of N-acetylmuramic acid (MurNAc). Binds to two adjacent inverted repeats within the operator region. MurNAc 6-phosphate, the substrate of MurQ, is the specific inducer that weakens binding of MurR to the operator. The sequence is that of HTH-type transcriptional regulator MurR from Escherichia coli (strain ATCC 8739 / DSM 1576 / NBRC 3972 / NCIMB 8545 / WDCM 00012 / Crooks).